Consider the following 268-residue polypeptide: Testis-specific serine/threonine-protein kinase 3 (268 aa).

Positions 10-265 (YQLGKTIGEG…IEEVSWHPWL (256 aa)) constitute a Protein kinase domain. ATP contacts are provided by residues 16-24 (IGEGTYSKV) and K39. The Proton acceptor role is filled by D134. S166 is modified (phosphoserine; by autocatalysis). T168 carries the post-translational modification Phosphothreonine; by PDPK1.

It belongs to the protein kinase superfamily. CAMK Ser/Thr protein kinase family. The cofactor is Mg(2+). Mn(2+) serves as cofactor. Autophosphorylated at Ser-166. Phosphorylation at Thr-168 by PDPK1 activates the serine/threonine protein kinase activity. As to expression, developmentally expressed in testicular germ cells. In adult testis, expression was detected in round and condensing spermatids, but not in meiotic pachytene spermatocytes. Not expressed in brain, ovary, kidney, liver or early embryonic cells.

It localises to the cell projection. The protein localises to the cilium. It is found in the flagellum. The catalysed reaction is L-seryl-[protein] + ATP = O-phospho-L-seryl-[protein] + ADP + H(+). It carries out the reaction L-threonyl-[protein] + ATP = O-phospho-L-threonyl-[protein] + ADP + H(+). Its activity is regulated as follows. Activated by phosphorylation on Thr-168 by PDPK1. Its function is as follows. Serine/threonine protein kinase required for spermatid development and male fertility. The protein is Testis-specific serine/threonine-protein kinase 3 of Mus musculus (Mouse).